The sequence spans 249 residues: Phosphatidylglycerol--prolipoprotein diacylglyceryl transferase (249 aa).

A run of 7 helical transmembrane segments spans residues 11–31, 49–69, 82–102, 116–136, 163–183, 192–212, and 223–243; these read LKIYGYGAMIALGILAAVILL, AIVGIIGGILGGKLLYIIVDI, LGNGFVIYGAIIGGAISVYLY, LVVPSVALAQGFGRIGCFLAG, LHPTQIYSSIFDFLLAFFLLW, GRVFSLYVIIYGVGRVIVEFL, and LSTSQFISLFTIIIGIFVFNI. Arg-129 serves as a coordination point for a 1,2-diacyl-sn-glycero-3-phospho-(1'-sn-glycerol).

This sequence belongs to the Lgt family.

The protein resides in the cell membrane. It catalyses the reaction L-cysteinyl-[prolipoprotein] + a 1,2-diacyl-sn-glycero-3-phospho-(1'-sn-glycerol) = an S-1,2-diacyl-sn-glyceryl-L-cysteinyl-[prolipoprotein] + sn-glycerol 1-phosphate + H(+). Its pathway is protein modification; lipoprotein biosynthesis (diacylglyceryl transfer). In terms of biological role, catalyzes the transfer of the diacylglyceryl group from phosphatidylglycerol to the sulfhydryl group of the N-terminal cysteine of a prolipoprotein, the first step in the formation of mature lipoproteins. In Clostridium tetani (strain Massachusetts / E88), this protein is Phosphatidylglycerol--prolipoprotein diacylglyceryl transferase.